The following is a 294-amino-acid chain: ATP phosphoribosyltransferase (294 aa).

It belongs to the ATP phosphoribosyltransferase family. Long subfamily. It depends on Mg(2+) as a cofactor.

The protein resides in the cytoplasm. The enzyme catalyses 1-(5-phospho-beta-D-ribosyl)-ATP + diphosphate = 5-phospho-alpha-D-ribose 1-diphosphate + ATP. The protein operates within amino-acid biosynthesis; L-histidine biosynthesis; L-histidine from 5-phospho-alpha-D-ribose 1-diphosphate: step 1/9. Feedback inhibited by histidine. Catalyzes the condensation of ATP and 5-phosphoribose 1-diphosphate to form N'-(5'-phosphoribosyl)-ATP (PR-ATP). Has a crucial role in the pathway because the rate of histidine biosynthesis seems to be controlled primarily by regulation of HisG enzymatic activity. This Chlorobium phaeobacteroides (strain DSM 266 / SMG 266 / 2430) protein is ATP phosphoribosyltransferase.